Consider the following 130-residue polypeptide: MAKDEKWGIANIYSSYNNTIITVTDITGAETISQWSGGKVVRADRQQASPFAAMAAATRIADDAKEKGFVGLHIRVRAPGGNGHRSPGPGAQATIRALARAGIKIGKIEDITPIPHDGTGRPGGKRGRRV.

The disordered stretch occupies residues 109–130 (EDITPIPHDGTGRPGGKRGRRV).

The protein belongs to the universal ribosomal protein uS11 family. As to quaternary structure, part of the 30S ribosomal subunit.

Its function is as follows. Located on the platform of the 30S subunit. This is Small ribosomal subunit protein uS11 from Methanobrevibacter smithii (strain ATCC 35061 / DSM 861 / OCM 144 / PS).